We begin with the raw amino-acid sequence, 286 residues long: Phosphatidylserine decarboxylase proenzyme (286 aa).

Residues Asp-90, His-147, and Ser-250 each act as charge relay system; for autoendoproteolytic cleavage activity in the active site. Catalysis depends on Ser-250, which acts as the Schiff-base intermediate with substrate; via pyruvic acid; for decarboxylase activity. Ser-250 is modified (pyruvic acid (Ser); by autocatalysis).

This sequence belongs to the phosphatidylserine decarboxylase family. PSD-B subfamily. Prokaryotic type I sub-subfamily. As to quaternary structure, heterodimer of a large membrane-associated beta subunit and a small pyruvoyl-containing alpha subunit. Pyruvate is required as a cofactor. Post-translationally, is synthesized initially as an inactive proenzyme. Formation of the active enzyme involves a self-maturation process in which the active site pyruvoyl group is generated from an internal serine residue via an autocatalytic post-translational modification. Two non-identical subunits are generated from the proenzyme in this reaction, and the pyruvate is formed at the N-terminus of the alpha chain, which is derived from the carboxyl end of the proenzyme. The autoendoproteolytic cleavage occurs by a canonical serine protease mechanism, in which the side chain hydroxyl group of the serine supplies its oxygen atom to form the C-terminus of the beta chain, while the remainder of the serine residue undergoes an oxidative deamination to produce ammonia and the pyruvoyl prosthetic group on the alpha chain. During this reaction, the Ser that is part of the protease active site of the proenzyme becomes the pyruvoyl prosthetic group, which constitutes an essential element of the active site of the mature decarboxylase.

The protein resides in the cell membrane. It catalyses the reaction a 1,2-diacyl-sn-glycero-3-phospho-L-serine + H(+) = a 1,2-diacyl-sn-glycero-3-phosphoethanolamine + CO2. It functions in the pathway phospholipid metabolism; phosphatidylethanolamine biosynthesis; phosphatidylethanolamine from CDP-diacylglycerol: step 2/2. Its function is as follows. Catalyzes the formation of phosphatidylethanolamine (PtdEtn) from phosphatidylserine (PtdSer). This is Phosphatidylserine decarboxylase proenzyme from Saccharophagus degradans (strain 2-40 / ATCC 43961 / DSM 17024).